A 375-amino-acid chain; its full sequence is Chaperone protein DnaJ (375 aa).

In terms of domain architecture, J spans 6–71 (DYYEILGVSR…DKRARYDQYG (66 aa)). The segment at 132–214 (GTTKKITIPR…CQGSGKVRKQ (83 aa)) adopts a CR-type zinc-finger fold. Residues Cys145, Cys148, Cys162, Cys165, Cys188, Cys191, Cys202, and Cys205 each coordinate Zn(2+). CXXCXGXG motif repeat units lie at residues 145–152 (CDTCNGTG), 162–169 (CPQCNGSG), 188–195 (CDRCGGRG), and 202–209 (CPTCQGSG). The interval 222–243 (PPGVDTGTRLRMPNEGEAGDKG) is disordered.

This sequence belongs to the DnaJ family. Homodimer. Zn(2+) is required as a cofactor.

Its subcellular location is the cytoplasm. Functionally, participates actively in the response to hyperosmotic and heat shock by preventing the aggregation of stress-denatured proteins and by disaggregating proteins, also in an autonomous, DnaK-independent fashion. Unfolded proteins bind initially to DnaJ; upon interaction with the DnaJ-bound protein, DnaK hydrolyzes its bound ATP, resulting in the formation of a stable complex. GrpE releases ADP from DnaK; ATP binding to DnaK triggers the release of the substrate protein, thus completing the reaction cycle. Several rounds of ATP-dependent interactions between DnaJ, DnaK and GrpE are required for fully efficient folding. Also involved, together with DnaK and GrpE, in the DNA replication of plasmids through activation of initiation proteins. The polypeptide is Chaperone protein DnaJ (Halothermothrix orenii (strain H 168 / OCM 544 / DSM 9562)).